Here is a 344-residue protein sequence, read N- to C-terminus: Dihydroorotase (344 aa).

2 residues coordinate Zn(2+): H13 and H15. Substrate is bound by residues 15 to 17 and N41; that span reads HLR. Zn(2+)-binding residues include K98, H135, and H173. An N6-carboxylysine modification is found at K98. H135 provides a ligand contact to substrate. L218 is a binding site for substrate. D247 serves as a coordination point for Zn(2+). The active site involves D247. Substrate is bound by residues H251 and A263.

Belongs to the metallo-dependent hydrolases superfamily. DHOase family. Class II DHOase subfamily. As to quaternary structure, homodimer. Requires Zn(2+) as cofactor.

The enzyme catalyses (S)-dihydroorotate + H2O = N-carbamoyl-L-aspartate + H(+). It participates in pyrimidine metabolism; UMP biosynthesis via de novo pathway; (S)-dihydroorotate from bicarbonate: step 3/3. Its function is as follows. Catalyzes the reversible cyclization of carbamoyl aspartate to dihydroorotate. The polypeptide is Dihydroorotase (Neisseria meningitidis serogroup C (strain 053442)).